The chain runs to 253 residues: Phosphoglycerate mutase 2 (253 aa).

At threonine 3 the chain carries Phosphothreonine. Residues 10-17, 23-24, arginine 62, 89-92, lysine 100, and 116-117 contribute to the substrate site; these read RHGESTWN, CG, ERHY, and RR. Residue histidine 11 is the Tele-phosphohistidine intermediate of the active site. Residue serine 14 is modified to Phosphoserine. Glutamate 89 functions as the Proton donor/acceptor in the catalytic mechanism. Serine 118 is modified (phosphoserine). Phosphotyrosine occurs at positions 132 and 133. Residue serine 135 is modified to Phosphoserine. At threonine 152 the chain carries Phosphothreonine. 187–188 provides a ligand contact to substrate; it reads GN.

Belongs to the phosphoglycerate mutase family. BPG-dependent PGAM subfamily. In terms of assembly, homodimer.

It catalyses the reaction (2R)-2-phosphoglycerate = (2R)-3-phosphoglycerate. The enzyme catalyses (2R)-3-phospho-glyceroyl phosphate = (2R)-2,3-bisphosphoglycerate + H(+). Its function is as follows. Interconversion of 3- and 2-phosphoglycerate with 2,3-bisphosphoglycerate as the primer of the reaction. Can also catalyze the reaction of EC 5.4.2.4 (synthase), but with a reduced activity. This Bos taurus (Bovine) protein is Phosphoglycerate mutase 2 (PGAM2).